We begin with the raw amino-acid sequence, 191 residues long: Pyridoxal 5'-phosphate synthase subunit PdxT (191 aa).

L-glutamine is bound at residue 48–50; that stretch reads GES. The active-site Nucleophile is Cys81. Residues Arg109 and 136–137 each bind L-glutamine; that span reads IR. Catalysis depends on charge relay system residues His172 and Glu174.

This sequence belongs to the glutaminase PdxT/SNO family. As to quaternary structure, in the presence of PdxS, forms a dodecamer of heterodimers. Only shows activity in the heterodimer.

The catalysed reaction is aldehydo-D-ribose 5-phosphate + D-glyceraldehyde 3-phosphate + L-glutamine = pyridoxal 5'-phosphate + L-glutamate + phosphate + 3 H2O + H(+). The enzyme catalyses L-glutamine + H2O = L-glutamate + NH4(+). The protein operates within cofactor biosynthesis; pyridoxal 5'-phosphate biosynthesis. Its function is as follows. Catalyzes the hydrolysis of glutamine to glutamate and ammonia as part of the biosynthesis of pyridoxal 5'-phosphate. The resulting ammonia molecule is channeled to the active site of PdxS. This chain is Pyridoxal 5'-phosphate synthase subunit PdxT, found in Thermus thermophilus (strain ATCC BAA-163 / DSM 7039 / HB27).